Reading from the N-terminus, the 240-residue chain is Probable phosphatase Athe_0620 (240 aa).

Residues His8, His10, His16, His41, Glu74, His102, His132, Asp192, and His194 each coordinate Zn(2+).

The protein belongs to the PHP family. Requires Zn(2+) as cofactor.

The sequence is that of Probable phosphatase Athe_0620 from Caldicellulosiruptor bescii (strain ATCC BAA-1888 / DSM 6725 / KCTC 15123 / Z-1320) (Anaerocellum thermophilum).